Here is a 238-residue protein sequence, read N- to C-terminus: Thymidine kinase a (238 aa).

Residues 38 to 45 (GPMFSGKS), 70 to 72 (DTR), and 115 to 118 (DEAQ) each bind ATP. The Proton acceptor role is filled by glutamate 116. Tyrosine 147 serves as a coordination point for substrate. Zn(2+) is bound by residues cysteine 172 and cysteine 175. Residues 191–195 (TELIG) and tyrosine 200 each bind substrate. A Zn(2+)-binding site is contributed by cysteine 204.

This sequence belongs to the thymidine kinase family. Monomer and dimer. Dimerization is stimulated by ATP. As to expression, expressed ubiquitously.

It is found in the cytoplasm. It carries out the reaction thymidine + ATP = dTMP + ADP + H(+). It participates in purine metabolism. It functions in the pathway pyrimidine metabolism. In terms of biological role, part of the salvage pathway for purine and pyrimidine deoxyribonucleotide synthesis. Phosphorylates preferentially purines over pyrimidines. Mediates tolerance to genotoxins, such as ultraviolet-C (UV-C) irradiation, MMC, a DNA crosslinker, and ZEO, a DNA intercalator, that induce double-strand breaks and thus contributes to several DNA repair pathways by providing deoxythymidine triphosphate that serve as precursors for DNA repair and to balance deoxyribonucleotides pools. This Arabidopsis thaliana (Mouse-ear cress) protein is Thymidine kinase a.